The chain runs to 189 residues: Movement protein (189 aa).

Belongs to the tombusvirus/aureusvirus movement protein p22 family.

Its subcellular location is the host membrane. Transports viral genome to neighboring plant cells directly through plasmosdesmata, without any budding. The movement protein allows efficient cell to cell propagation, by bypassing the host cell wall barrier. The polypeptide is Movement protein (Artichoke mottled crinkle virus (AMCV)).